We begin with the raw amino-acid sequence, 51 residues long: Ribosome biogenesis protein Nop10 (51 aa).

Belongs to the NOP10 family.

Functionally, involved in ribosome biogenesis; more specifically in 18S rRNA pseudouridylation and in cleavage of pre-rRNA. This is Ribosome biogenesis protein Nop10 from Nitrosopumilus maritimus (strain SCM1).